A 288-amino-acid polypeptide reads, in one-letter code: ATP synthase subunit a (288 aa).

The next 6 helical transmembrane spans lie at 47–67 (LDSMLWSIGLGIVFCALFWLV), 104–124 (LIAPLALTIFVWIFLMNLMDL), 157–177 (DPNITLGMSFSVFALIIYYSI), 199–219 (PIAKIILIPINFILEFVTLIA), 237–257 (LIFVLIALMPFWIQWALSVPW), and 258–278 (AIFHILIITLQAFVFMMLTIV).

Belongs to the ATPase A chain family. F-type ATPases have 2 components, CF(1) - the catalytic core - and CF(0) - the membrane proton channel. CF(1) has five subunits: alpha(3), beta(3), gamma(1), delta(1), epsilon(1). CF(0) has three main subunits: a(1), b(2) and c(9-12). The alpha and beta chains form an alternating ring which encloses part of the gamma chain. CF(1) is attached to CF(0) by a central stalk formed by the gamma and epsilon chains, while a peripheral stalk is formed by the delta and b chains.

It localises to the cell inner membrane. In terms of biological role, key component of the proton channel; it plays a direct role in the translocation of protons across the membrane. The sequence is that of ATP synthase subunit a from Psychrobacter sp. (strain PRwf-1).